Consider the following 490-residue polypeptide: Cardiolipin synthase 1 (490 aa).

Helical transmembrane passes span 9–29 and 42–62; these read ILTILLVVGFITNVVLAFVII and WAWLFVLFVLPVIGFILYLFL. PLD phosphodiesterase domains are found at residues 225 to 252 and 403 to 430; these read MNNRNHRKIIIIDGQIGYVGGFNVGDDY and QNGFIHSKILMIDDEISSIGSANMDFRS. Residues His230, Lys232, Asp237, His408, Lys410, and Asp415 contribute to the active site.

It belongs to the phospholipase D family. Cardiolipin synthase subfamily.

The protein localises to the cell membrane. The catalysed reaction is 2 a 1,2-diacyl-sn-glycero-3-phospho-(1'-sn-glycerol) = a cardiolipin + glycerol. Functionally, catalyzes the reversible phosphatidyl group transfer from one phosphatidylglycerol molecule to another to form cardiolipin (CL) (diphosphatidylglycerol) and glycerol. The polypeptide is Cardiolipin synthase 1 (cls1) (Staphylococcus epidermidis (strain ATCC 12228 / FDA PCI 1200)).